Reading from the N-terminus, the 426-residue chain is Serine--tRNA ligase (426 aa).

233 to 235 provides a ligand contact to L-serine; that stretch reads TAE. 264–266 serves as a coordination point for ATP; sequence RSE. Residue E287 participates in L-serine binding. Residue 351–354 coordinates ATP; the sequence is EISS. S387 serves as a coordination point for L-serine.

This sequence belongs to the class-II aminoacyl-tRNA synthetase family. Type-1 seryl-tRNA synthetase subfamily. As to quaternary structure, homodimer. The tRNA molecule binds across the dimer.

It is found in the cytoplasm. It carries out the reaction tRNA(Ser) + L-serine + ATP = L-seryl-tRNA(Ser) + AMP + diphosphate + H(+). The catalysed reaction is tRNA(Sec) + L-serine + ATP = L-seryl-tRNA(Sec) + AMP + diphosphate + H(+). Its pathway is aminoacyl-tRNA biosynthesis; selenocysteinyl-tRNA(Sec) biosynthesis; L-seryl-tRNA(Sec) from L-serine and tRNA(Sec): step 1/1. In terms of biological role, catalyzes the attachment of serine to tRNA(Ser). Is also able to aminoacylate tRNA(Sec) with serine, to form the misacylated tRNA L-seryl-tRNA(Sec), which will be further converted into selenocysteinyl-tRNA(Sec). The chain is Serine--tRNA ligase from Pseudomonas syringae pv. syringae (strain B728a).